A 309-amino-acid chain; its full sequence is Ribonuclease Z (309 aa).

His-63, His-65, Asp-67, His-68, His-141, Asp-212, and His-270 together coordinate Zn(2+). Asp-67 acts as the Proton acceptor in catalysis.

The protein belongs to the RNase Z family. As to quaternary structure, homodimer. Requires Zn(2+) as cofactor.

It carries out the reaction Endonucleolytic cleavage of RNA, removing extra 3' nucleotides from tRNA precursor, generating 3' termini of tRNAs. A 3'-hydroxy group is left at the tRNA terminus and a 5'-phosphoryl group is left at the trailer molecule.. Zinc phosphodiesterase, which displays some tRNA 3'-processing endonuclease activity. Probably involved in tRNA maturation, by removing a 3'-trailer from precursor tRNA. The chain is Ribonuclease Z from Lactobacillus gasseri (strain ATCC 33323 / DSM 20243 / BCRC 14619 / CIP 102991 / JCM 1131 / KCTC 3163 / NCIMB 11718 / NCTC 13722 / AM63).